The primary structure comprises 486 residues: Putative protease Do-like 13 (486 aa).

The interval 44 to 229 (KINTFSSKPN…IPAPVVKHFI (186 aa)) is serine protease. Active-site charge relay system residues include histidine 83, aspartate 114, and serine 192. The PDZ domain maps to 241–334 (FCSLNLSYQH…TILLKILREG (94 aa)).

It belongs to the peptidase S1C family.

In terms of biological role, putative serine protease. The sequence is that of Putative protease Do-like 13 (DEGP13) from Arabidopsis thaliana (Mouse-ear cress).